Reading from the N-terminus, the 160-residue chain is Complexin-4 (160 aa).

The disordered stretch occupies residues 14–44 (KNLGFGGGSEEKKEEGGTSDPAAAKGMTREE). Cys-157 carries the post-translational modification Cysteine methyl ester. Cys-157 is lipidated: S-farnesyl cysteine. Residues 158–160 (SVM) constitute a propeptide, removed in mature form.

It belongs to the complexin/synaphin family. In terms of assembly, weakly binds to the SNARE core complex containing SNAP25, VAMP2 and STX1A. Farnesylation mediates presynaptic targeting and is important for function in neurotransmitter release. As to expression, present specifically in the retina (at protein level). Expressed in the outer nuclear layer of the retina (at protein level). Strongly expressed at rod photoreceptor ribbon synapses (at protein level). Not expressed at conventional amacrine cell synapses, nor at cone photoreceptor ribbon synapses (at protein level). Weakly expressed at cone photoreceptor synaptic terminals (at protein level). Not expressed in the brain (at protein level).

It localises to the synapse. Its subcellular location is the cell membrane. Functionally, complexin that regulates SNARE protein complex-mediated synaptic vesicle fusion. Required for the maintenance of synaptic ultrastructure in the adult retina. Positively regulates synaptic transmission through synaptic vesicle availability and exocytosis of neurotransmitters at photoreceptor ribbon synapses in the retina. Suppresses tonic photoreceptor activity and baseline 'noise' by suppression of Ca(2+) vesicle tonic release and the facilitation of evoked synchronous and asynchronous Ca(2+) vesicle release. The chain is Complexin-4 (Cplx4) from Mus musculus (Mouse).